Consider the following 1381-residue polypeptide: DNA-directed RNA polymerase subunit beta'' (1381 aa).

Zn(2+) contacts are provided by Cys220, Cys293, Cys300, and Cys303.

This sequence belongs to the RNA polymerase beta' chain family. RpoC2 subfamily. In terms of assembly, in plastids the minimal PEP RNA polymerase catalytic core is composed of four subunits: alpha, beta, beta', and beta''. When a (nuclear-encoded) sigma factor is associated with the core the holoenzyme is formed, which can initiate transcription. Requires Zn(2+) as cofactor.

The protein localises to the plastid. It is found in the chloroplast. The catalysed reaction is RNA(n) + a ribonucleoside 5'-triphosphate = RNA(n+1) + diphosphate. In terms of biological role, DNA-dependent RNA polymerase catalyzes the transcription of DNA into RNA using the four ribonucleoside triphosphates as substrates. The polypeptide is DNA-directed RNA polymerase subunit beta'' (Draba nemorosa (Woodland whitlowgrass)).